Consider the following 253-residue polypeptide: Glutamate racemase (253 aa).

Substrate is bound by residues 7 to 8 and 39 to 40; these read DS and YG. The active-site Proton donor/acceptor is Cys-70. 71 to 72 serves as a coordination point for substrate; sequence NS. Cys-179 acts as the Proton donor/acceptor in catalysis. Position 180–181 (180–181) interacts with substrate; sequence TH.

This sequence belongs to the aspartate/glutamate racemases family.

The catalysed reaction is L-glutamate = D-glutamate. It participates in cell wall biogenesis; peptidoglycan biosynthesis. Provides the (R)-glutamate required for cell wall biosynthesis. This chain is Glutamate racemase, found in Nitratiruptor sp. (strain SB155-2).